The following is a 351-amino-acid chain: Large ribosomal subunit protein uL3 (351 aa).

2 disordered regions span residues M1–T31 and K246–G271.

Belongs to the universal ribosomal protein uL3 family. Part of the 50S ribosomal subunit. Forms a cluster with proteins L14 and L24e.

Functionally, one of the primary rRNA binding proteins, it binds directly near the 3'-end of the 23S rRNA, where it nucleates assembly of the 50S subunit. In Saccharolobus islandicus (strain Y.N.15.51 / Yellowstone #2) (Sulfolobus islandicus), this protein is Large ribosomal subunit protein uL3.